We begin with the raw amino-acid sequence, 358 residues long: tRNA-specific 2-thiouridylase MnmA (358 aa).

ATP-binding positions include 6–13 (LVSGGVDS) and Ile32. The segment at 93-95 (NPD) is interaction with target base in tRNA. Cys98 acts as the Nucleophile in catalysis. A disulfide bridge connects residues Cys98 and Cys193. Residue Gly121 participates in ATP binding. The segment at 143 to 145 (KDQ) is interaction with tRNA. Residue Cys193 is the Cysteine persulfide intermediate of the active site.

Belongs to the MnmA/TRMU family.

It is found in the cytoplasm. It carries out the reaction S-sulfanyl-L-cysteinyl-[protein] + uridine(34) in tRNA + AH2 + ATP = 2-thiouridine(34) in tRNA + L-cysteinyl-[protein] + A + AMP + diphosphate + H(+). In terms of biological role, catalyzes the 2-thiolation of uridine at the wobble position (U34) of tRNA, leading to the formation of s(2)U34. The polypeptide is tRNA-specific 2-thiouridylase MnmA (Parabacteroides distasonis (strain ATCC 8503 / DSM 20701 / CIP 104284 / JCM 5825 / NCTC 11152)).